Reading from the N-terminus, the 206-residue chain is Large ribosomal subunit protein bL25 (206 aa).

Residues 168-206 are disordered; that stretch reads DPEESVVTVEVPEDASESTAAPEAAAPAADAAAPAADAK. Over residues 184-206 the composition is skewed to low complexity; sequence ESTAAPEAAAPAADAAAPAADAK.

This sequence belongs to the bacterial ribosomal protein bL25 family. CTC subfamily. Part of the 50S ribosomal subunit; part of the 5S rRNA/L5/L18/L25 subcomplex. Contacts the 5S rRNA. Binds to the 5S rRNA independently of L5 and L18.

Its function is as follows. This is one of the proteins that binds to the 5S RNA in the ribosome where it forms part of the central protuberance. The protein is Large ribosomal subunit protein bL25 of Bifidobacterium longum (strain DJO10A).